Reading from the N-terminus, the 159-residue chain is U1 small nuclear ribonucleoprotein C (159 aa).

The segment at 4-36 (FYCDYCDTYLTHDSPSVRKTHCSGRKHKENVKD) adopts a Matrin-type zinc-finger fold. Residues 61-99 (KIPPTPFPGAPPPGGSLLPHPSIGGPPRPGMLPAPPMGG) are disordered. Composition is skewed to pro residues over residues 63 to 74 (PPTPFPGAPPPG) and 84 to 99 (GGPPRPGMLPAPPMGG).

This sequence belongs to the U1 small nuclear ribonucleoprotein C family. In terms of assembly, component of the U1 snRNP. The U1 snRNP is composed of the U1 snRNA and the 7 core Sm proteins snrpb, snrpd1, snrpd2, snrpd3, snrpe, snrpf and snrpg that assemble in a heptameric protein ring on the Sm site of the small nuclear RNA to form the core snRNP, and at least 3 U1 snRNP-specific proteins snrnp70/U1-70K, snrpa/U1-A and snrpc/U1-C. snrpc/U1-C interacts with U1 snRNA and the 5' splice-site region of the pre-mRNA.

It is found in the nucleus. Component of the spliceosomal U1 snRNP, which is essential for recognition of the pre-mRNA 5' splice-site and the subsequent assembly of the spliceosome. snrpc/U1-C is directly involved in initial 5' splice-site recognition for both constitutive and regulated alternative splicing. The interaction with the 5' splice-site seems to precede base-pairing between the pre-mRNA and the U1 snRNA. Stimulates commitment or early (E) complex formation by stabilizing the base pairing of the 5' end of the U1 snRNA and the 5' splice-site region. The chain is U1 small nuclear ribonucleoprotein C from Danio rerio (Zebrafish).